A 588-amino-acid chain; its full sequence is Phosphoinositide phosphatase SAC8 (588 aa).

Positions 37–56 (FSVNRRDGNIKPLDENASSG) are disordered. Positions 40 to 50 (NRRDGNIKPLD) are enriched in basic and acidic residues. Residues 129 to 455 (LQALETTPGL…GDEVSLQYAG (327 aa)) form the SAC domain. The short motif at 390 to 401 (RSNCIDCLDRTN) is the Phosphatase catalytic core element. The next 2 membrane-spanning stretches (helical) occupy residues 524–544 (SFLP…SFTI) and 555–575 (LASA…KANG).

In terms of tissue distribution, ubiquitous with a higher level of expression in young seedlings than in other tissues.

The protein localises to the endoplasmic reticulum membrane. In terms of biological role, phosphoinositide phosphatase that hydrolyzes PtdIns(3)P and PtdIns(4)P. The polypeptide is Phosphoinositide phosphatase SAC8 (SAC8) (Arabidopsis thaliana (Mouse-ear cress)).